A 532-amino-acid chain; its full sequence is Sodium-dependent lysophosphatidylcholine symporter 1-A (532 aa).

The Cytoplasmic segment spans residues 1 to 40; that stretch reads MARGEGAEQFSSGLLPTAKSVTQNEIKMVKLPKQQERKRA. Residues 41–70 form a helical membrane-spanning segment; that stretch reads LTVWSKVCFAIGGAPYQITGTALGFFLQIF. Over 71–81 the chain is Extracellular; sequence LLDVAQLNPLN. The chain crosses the membrane as a helical span at residues 82 to 102; sequence ASVILFVGRAWDAVTDPTVGF. Residues 103-114 lie on the Cytoplasmic side of the membrane; that stretch reads LVSRTPWTRHGR. The helical transmembrane segment at 115–134 threads the bilayer; the sequence is MMPWILVSTIPAVLCYFLIW. Residues 135-144 are Extracellular-facing; it reads VVPPIEQGKM. The helical transmembrane segment at 145 to 169 threads the bilayer; sequence MWYLLFYCLFQTLQTCFHVPYSALT. The Cytoplasmic segment spans residues 170-176; the sequence is MFISTEQ. The chain crosses the membrane as a helical span at residues 177–208; it reads RERDSATAYRMTVEVFGTVVGTAIQGQIVGMA. Topologically, residues 209-232 are extracellular; the sequence is NTPCKNNTSPNNSSNDLIQSNNSH. Residues Cys-212 and Cys-464 are joined by a disulfide bond. N-linked (GlcNAc...) asparagine glycans are attached at residues Asn-214, Asn-220, and Asn-229. A helical transmembrane segment spans residues 233–266; that stretch reads IPLKSNIFDERCAYMIASAVISLIYVVCAAVLFF. The Cytoplasmic segment spans residues 267-297; it reads GVREQDVQGELKAQKRVSFQKGLRLVMGHGP. The helical transmembrane segment at 298–324 threads the bilayer; it reads YVKLVLAFLFTSLAFMLLEGNFAVFIK. Topologically, residues 325–335 are extracellular; it reads YTLGFREDFQN. The helical transmembrane segment at 336 to 354 threads the bilayer; that stretch reads ILLVIMVSATVSIPMWQWF. The Cytoplasmic portion of the chain corresponds to 355-358; it reads LCRF. Residues 359-380 traverse the membrane as a helical segment; it reads GKKTAVYIGITWAVPFMILVVS. Topologically, residues 381 to 383 are extracellular; the sequence is VNS. Residues 384 to 420 traverse the membrane as a helical segment; the sequence is SLIVSYIVSIAAGVSVGAAFLLPWSMLPDVVDDFKLQ. Residues 421 to 430 are Cytoplasmic-facing; sequence NPTSQGHEAI. The chain crosses the membrane as a helical span at residues 431–457; it reads FYSFYVFFTKFASGVSLGVSTLALSFA. Over 458-469 the chain is Extracellular; the sequence is GYETGVCVQSDS. Residues 470 to 493 form a helical membrane-spanning segment; that stretch reads VNLTLKLLVSAAPVSLIALGLLIF. Residues 494-532 lie on the Cytoplasmic side of the membrane; the sequence is MTYPIDEERREYNNKQLQLLLRNEEEEDEMEVLKPDITA.

The protein belongs to the major facilitator superfamily. Expressed in the developing nervous system.

The protein localises to the cell membrane. It localises to the endoplasmic reticulum membrane. It carries out the reaction a 1-acyl-sn-glycero-3-phosphocholine(in) + Na(+)(in) = a 1-acyl-sn-glycero-3-phosphocholine(out) + Na(+)(out). It catalyses the reaction 1-(4Z,7Z,10Z,13Z,16Z,19Z-docosahexaenoyl)-sn-glycero-3-phosphocholine(in) + Na(+)(in) = 1-(4Z,7Z,10Z,13Z,16Z,19Z-docosahexaenoyl)-sn-glycero-3-phosphocholine(out) + Na(+)(out). The enzyme catalyses 1-(9Z-octadecenoyl)-sn-glycero-3-phosphocholine(in) + Na(+)(in) = 1-(9Z-octadecenoyl)-sn-glycero-3-phosphocholine(out) + Na(+)(out). The catalysed reaction is 1-hexadecanoyl-sn-glycero-3-phosphocholine(in) + Na(+)(in) = 1-hexadecanoyl-sn-glycero-3-phosphocholine(out) + Na(+)(out). It carries out the reaction a 1-acyl-sn-glycero-3-phosphoethanolamine(in) + Na(+)(in) = a 1-acyl-sn-glycero-3-phosphoethanolamine(out) + Na(+)(out). Its function is as follows. Sodium-dependent lysophosphatidylcholine (LPC) symporter, which plays an essential role for blood-brain barrier formation and function. Specifically expressed in endothelium of the blood-brain barrier of micro-vessels and transports LPC into the brain. Transport of LPC is essential because it constitutes the major mechanism by which docosahexaenoic acid (DHA), an omega-3 fatty acid that is essential for normal brain growth and cognitive function, enters the brain. Transports LPC carrying long-chain fatty acids such LPC oleate and LPC palmitate with a minimum acyl chain length of 14 carbons. Does not transport docosahexaenoic acid in unesterified fatty acid. This chain is Sodium-dependent lysophosphatidylcholine symporter 1-A (mfsd2aa), found in Danio rerio (Zebrafish).